Reading from the N-terminus, the 344-residue chain is Aspartate-semialdehyde dehydrogenase (344 aa).

Residues 10–13 (TGQV) and 38–39 (RS) contribute to the NADP(+) site. Position 101 (R101) interacts with phosphate. The Acyl-thioester intermediate role is filled by C131. Residue Q158 coordinates substrate. Residue 161 to 162 (SG) participates in NADP(+) binding. A phosphate-binding site is contributed by K228. Residue R250 participates in substrate binding. H257 acts as the Proton acceptor in catalysis. N326 contributes to the NADP(+) binding site.

Belongs to the aspartate-semialdehyde dehydrogenase family. In terms of assembly, homodimer.

The enzyme catalyses L-aspartate 4-semialdehyde + phosphate + NADP(+) = 4-phospho-L-aspartate + NADPH + H(+). The protein operates within amino-acid biosynthesis; L-lysine biosynthesis via DAP pathway; (S)-tetrahydrodipicolinate from L-aspartate: step 2/4. It participates in amino-acid biosynthesis; L-methionine biosynthesis via de novo pathway; L-homoserine from L-aspartate: step 2/3. Its pathway is amino-acid biosynthesis; L-threonine biosynthesis; L-threonine from L-aspartate: step 2/5. Its function is as follows. Catalyzes the NADPH-dependent formation of L-aspartate-semialdehyde (L-ASA) by the reductive dephosphorylation of L-aspartyl-4-phosphate. This is Aspartate-semialdehyde dehydrogenase from Corynebacterium glutamicum (strain ATCC 13032 / DSM 20300 / JCM 1318 / BCRC 11384 / CCUG 27702 / LMG 3730 / NBRC 12168 / NCIMB 10025 / NRRL B-2784 / 534).